We begin with the raw amino-acid sequence, 259 residues long: Global transcriptional regulator CodY (259 aa).

The interval 1–155 is GAF domain; that stretch reads MTLLEKTRKI…GGTVVGMEIL (155 aa). Positions 203–222 form a DNA-binding region, H-T-H motif; the sequence is ASKIADRVGITRSVIVNALR.

Belongs to the CodY family.

It is found in the cytoplasm. In terms of biological role, DNA-binding global transcriptional regulator which is involved in the adaptive response to starvation and acts by directly or indirectly controlling the expression of numerous genes in response to nutrient availability. During rapid exponential growth, CodY is highly active and represses genes whose products allow adaptation to nutrient depletion. The sequence is that of Global transcriptional regulator CodY from Listeria monocytogenes serotype 4b (strain CLIP80459).